Consider the following 193-residue polypeptide: Histone H5 (193 aa).

Positions 1-11 (TDSPIPAPAPA) are enriched in pro residues. Disordered stretches follow at residues 1-29 (TDSPIPAPAPAAKPKRARAPRKPASHPTY) and 80-193 (GVLK…PKKK). Basic residues predominate over residues 13-24 (KPKRARAPRKPA). The H15 domain maps to 25-98 (SHPTYSEMIA…GASGSFRLAK (74 aa)). Over residues 104–193 (RSPAGRKKKK…SGARKSPKKK (90 aa)) the composition is skewed to basic residues.

The protein belongs to the histone H1/H5 family. As to expression, erythroid cells.

It is found in the nucleus. Its subcellular location is the chromosome. Its function is as follows. Histone H5 performs the same function as H1, being necessary for the condensation of nucleosome chains into higher order structures, and replaces histone H1 in certain cells. The polypeptide is Histone H5 (Anser anser anser (Western greylag goose)).